We begin with the raw amino-acid sequence, 274 residues long: ATP synthase subunit delta (274 aa).

The protein belongs to the ATPase delta chain family. As to quaternary structure, F-type ATPases have 2 components, F(1) - the catalytic core - and F(0) - the membrane proton channel. F(1) has five subunits: alpha(3), beta(3), gamma(1), delta(1), epsilon(1). F(0) has three main subunits: a(1), b(2) and c(10-14). The alpha and beta chains form an alternating ring which encloses part of the gamma chain. F(1) is attached to F(0) by a central stalk formed by the gamma and epsilon chains, while a peripheral stalk is formed by the delta and b chains.

It localises to the cell membrane. Its function is as follows. F(1)F(0) ATP synthase produces ATP from ADP in the presence of a proton or sodium gradient. F-type ATPases consist of two structural domains, F(1) containing the extramembraneous catalytic core and F(0) containing the membrane proton channel, linked together by a central stalk and a peripheral stalk. During catalysis, ATP synthesis in the catalytic domain of F(1) is coupled via a rotary mechanism of the central stalk subunits to proton translocation. This protein is part of the stalk that links CF(0) to CF(1). It either transmits conformational changes from CF(0) to CF(1) or is implicated in proton conduction. In Acidothermus cellulolyticus (strain ATCC 43068 / DSM 8971 / 11B), this protein is ATP synthase subunit delta.